Consider the following 224-residue polypeptide: 7-cyano-7-deazaguanine synthase (224 aa).

Position 12-22 (12-22 (MSGGMDSTLGA)) interacts with ATP. Zn(2+) is bound by residues Cys-191, Cys-199, Cys-202, and Cys-205.

The protein belongs to the QueC family. Requires Zn(2+) as cofactor.

It carries out the reaction 7-carboxy-7-deazaguanine + NH4(+) + ATP = 7-cyano-7-deazaguanine + ADP + phosphate + H2O + H(+). The protein operates within purine metabolism; 7-cyano-7-deazaguanine biosynthesis. Its function is as follows. Catalyzes the ATP-dependent conversion of 7-carboxy-7-deazaguanine (CDG) to 7-cyano-7-deazaguanine (preQ(0)). The polypeptide is 7-cyano-7-deazaguanine synthase (Sulfurimonas denitrificans (strain ATCC 33889 / DSM 1251) (Thiomicrospira denitrificans (strain ATCC 33889 / DSM 1251))).